The sequence spans 92 residues: N(2)-fixation sustaining protein CowN (92 aa).

Belongs to the CowN family.

Functionally, is required to sustain N(2)-dependent growth in the presence of low levels of carbon monoxide (CO). Probably acts by protecting the N(2) fixation ability of the nitrogenase complex, which is inactivated in the presence of CO. This chain is N(2)-fixation sustaining protein CowN, found in Rhodobacter capsulatus (strain ATCC BAA-309 / NBRC 16581 / SB1003).